The chain runs to 389 residues: uncharacterized protein (389 aa).

This is an uncharacterized protein from Treponema pallidum (strain Nichols).